A 249-amino-acid chain; its full sequence is MYTLVLLRHGESTWNKENRFTGWTDVDLSKDGIVEAGRSGRLLNEAGFTFDLCHTSVLRRAIRTLWIVLDTMDLMYLPVHHSWRLNERHYGALQGLDKRETTEKYGKEQVLLWRRGYAVRPPALAEEDPRHPRFDPRYAGLGPDALPATESLEDTLARVVPYWKNSIAPEVKAGKRILIAAHGNSIRALVKYLDHIPDNEITGLNIPTGFPLVYEIDKDLHPIRHYYLGDPDEIRRATESVADQTSARK.

Residues 8–15, 21–22, R60, 87–90, K98, 114–115, and 183–184 contribute to the substrate site; these read RHGESTWN, TG, ERHY, RR, and GN. Residue H9 is the Tele-phosphohistidine intermediate of the active site. Residue E87 is the Proton donor/acceptor of the active site.

This sequence belongs to the phosphoglycerate mutase family. BPG-dependent PGAM subfamily.

It carries out the reaction (2R)-2-phosphoglycerate = (2R)-3-phosphoglycerate. It participates in carbohydrate degradation; glycolysis; pyruvate from D-glyceraldehyde 3-phosphate: step 3/5. Catalyzes the interconversion of 2-phosphoglycerate and 3-phosphoglycerate. The protein is 2,3-bisphosphoglycerate-dependent phosphoglycerate mutase of Methanoregula boonei (strain DSM 21154 / JCM 14090 / 6A8).